Reading from the N-terminus, the 72-residue chain is Translation initiation factor IF-1 (72 aa).

An S1-like domain is found at 1-72 (MAKDDVIEVE…TRGRITYRYK (72 aa)). The residue at position 60 (Tyr60) is a Phosphotyrosine.

The protein belongs to the IF-1 family. As to quaternary structure, component of the 30S ribosomal translation pre-initiation complex which assembles on the 30S ribosome in the order IF-2 and IF-3, IF-1 and N-formylmethionyl-tRNA(fMet); mRNA recruitment can occur at any time during PIC assembly.

The protein resides in the cytoplasm. Its function is as follows. One of the essential components for the initiation of protein synthesis. Stabilizes the binding of IF-2 and IF-3 on the 30S subunit to which N-formylmethionyl-tRNA(fMet) subsequently binds. Helps modulate mRNA selection, yielding the 30S pre-initiation complex (PIC). Upon addition of the 50S ribosomal subunit IF-1, IF-2 and IF-3 are released leaving the mature 70S translation initiation complex. The chain is Translation initiation factor IF-1 from Geobacillus thermodenitrificans (strain NG80-2).